Here is a 471-residue protein sequence, read N- to C-terminus: Putative multidrug resistance protein MdtD (471 aa).

The Periplasmic portion of the chain corresponds to 1-11 (MTDLPDSTRWQ). The chain crosses the membrane as a helical span at residues 12 to 32 (LWIVAFGFFMQSLDTTIVNTA). Residues 33–48 (LPSMAQSLGESPLHMH) lie on the Cytoplasmic side of the membrane. A helical membrane pass occupies residues 49-69 (MVIVSYVLTVAVMLPASGWLA). The Periplasmic portion of the chain corresponds to 70-76 (DKVGVRN). A helical membrane pass occupies residues 77 to 97 (IFFTAIVLFTLGSLFCALSGT). The Cytoplasmic portion of the chain corresponds to 98–101 (LNEL). The helical transmembrane segment at 102-124 (LLARALQGVGGAMMVPVGRLTVM) threads the bilayer. Residues 125–137 (KIVPREQYMAAMT) lie on the Periplasmic side of the membrane. A helical membrane pass occupies residues 138 to 158 (FVTLPGQVGPLLGPALGGLLV). The Cytoplasmic portion of the chain corresponds to 159 to 164 (EYASWH). The helical transmembrane segment at 165–185 (WIFLINIPVGIIGAIATLMLM) threads the bilayer. Over 186–196 (PNYTMQTRRFD) the chain is Periplasmic. The helical transmembrane segment at 197–217 (LSGFLLLAVGMAVLTLALDGS) threads the bilayer. Residues 218 to 224 (KGTGLSP) are Cytoplasmic-facing. A helical membrane pass occupies residues 225–245 (LTIDGLVAVGVVALVLYLLHA). Topologically, residues 246 to 262 (RNNNRALFSLKLFRTRT) are periplasmic. A helical membrane pass occupies residues 263–283 (FSLGLAGSFAGRIGSGMLPFM). Residues 284-285 (TP) lie on the Cytoplasmic side of the membrane. Residues 286-306 (VFLQIGLGFSPFHAGLMMIPM) form a helical membrane-spanning segment. Residues 307–341 (VLGSMGMKRIVVQVVNRFGYRRVLVATTLGLSLVT) are Periplasmic-facing. Residues 342 to 362 (LLFMTTALLGWYYVLPFVLFL) traverse the membrane as a helical segment. The Cytoplasmic portion of the chain corresponds to 363 to 395 (QGMVNSTRFSSMNTLTLKDLPDNLASSGNSLLS). A helical transmembrane segment spans residues 396 to 416 (MIMQLSMSIGVTIAGLLLGLF). The Periplasmic portion of the chain corresponds to 417 to 430 (GSQHVSVDSGTTQT). Residues 431-451 (VFMYTWLSMAFIIALPAFIFA) traverse the membrane as a helical segment. Residues 452–471 (RVPNDTHQNVAISRRKRSAQ) lie on the Cytoplasmic side of the membrane.

This sequence belongs to the major facilitator superfamily. TCR/Tet family.

It is found in the cell inner membrane. This is Putative multidrug resistance protein MdtD from Escherichia coli O8 (strain IAI1).